The chain runs to 114 residues: Chaperone protein YscY (114 aa).

Binds to YscX.

The protein resides in the cytoplasm. Required for Yop secretion. Functions probably as a chaperone which stabilizes YscX within the cell, before its secretion. This Yersinia enterocolitica serotype O:8 / biotype 1B (strain NCTC 13174 / 8081) protein is Chaperone protein YscY (yscY).